The sequence spans 396 residues: Unsaturated chondroitin disaccharide hydrolase (396 aa).

Residue Asp113 is the Nucleophile of the active site. 8 residues coordinate substrate: Asp113, Asp173, Gly231, Thr233, Arg245, Trp249, Ser363, and Ser366. Asp173 serves as the catalytic Proton donor.

The protein belongs to the glycosyl hydrolase 88 family. In terms of assembly, monomer.

It catalyses the reaction beta-D-4-deoxy-Delta(4)-GlcpA-(1-&gt;3)-beta-D-GalpNAc6S + H2O = N-acetyl-beta-D-galactosamine 6-sulfate + 5-dehydro-4-deoxy-D-glucuronate. Functionally, catalyzes the hydrolysis of unsaturated hyaluronate and chondroitin disaccharides. Also degrades unsaturated heparin disaccharides. Releases 4-deoxy-4,5-didehydro D-glucuronic acid or 4-deoxy-4,5-didehydro L-iduronic acid from chondroitin disaccharides, hyaluronan disaccharides and heparin disaccharides and cleaves both glycosidic (1-&gt;3) and (1-&gt;4) bonds. Prefers sulfated glycosaminoglycans compared to unsulfated glycosaminoglycans. Probably required for mammalian cells invasion through the degradation of extracellular sulfated glycosaminoglycans such as chondroitin and hyaluronan. The polypeptide is Unsaturated chondroitin disaccharide hydrolase (ugl) (Streptococcus pneumoniae (strain ATCC BAA-255 / R6)).